A 121-amino-acid polypeptide reads, in one-letter code: Small ribosomal subunit protein uS13 (121 aa).

The tract at residues 90 to 121 is disordered; the sequence is RHRRGLPVRGQHTKNNARTRKGKKVSIAGRKK.

Belongs to the universal ribosomal protein uS13 family. As to quaternary structure, part of the 30S ribosomal subunit. Forms a loose heterodimer with protein S19. Forms two bridges to the 50S subunit in the 70S ribosome.

Located at the top of the head of the 30S subunit, it contacts several helices of the 16S rRNA. In the 70S ribosome it contacts the 23S rRNA (bridge B1a) and protein L5 of the 50S subunit (bridge B1b), connecting the 2 subunits; these bridges are implicated in subunit movement. Contacts the tRNAs in the A and P-sites. The polypeptide is Small ribosomal subunit protein uS13 (Lactiplantibacillus plantarum (strain ATCC BAA-793 / NCIMB 8826 / WCFS1) (Lactobacillus plantarum)).